Consider the following 631-residue polypeptide: Shootin-1 (631 aa).

At Met-1 the chain carries N-acetylmethionine. Phosphoserine is present on residues Ser-3 and Ser-4. Positions 7-353 form a coiled coil; sequence EKQLQLITSL…RVNQSENSVP (347 aa). The residue at position 101 (Ser-101) is a Phosphoserine; by PAK1. Ser-249 is subject to Phosphoserine. Residues 343–511 are disordered; the sequence is KRVNQSENSV…SESKSMPVLG (169 aa). Pro residues predominate over residues 352–369; that stretch reads VPPPPPPPPPLPPPPPNP. A Phosphoserine modification is found at Ser-375. The span at 403 to 418 shows a compositional bias: basic and acidic residues; it reads TDLKRQAVEEMMDRIK. The span at 456-465 shows a compositional bias: polar residues; the sequence is LNKSTSSRSL. Phosphoserine is present on Ser-473. Phosphothreonine is present on Thr-487. The span at 490–505 shows a compositional bias: polar residues; it reads ADSSSPTGILATSESK. At Ser-494 the chain carries Phosphoserine. Thr-496 carries the post-translational modification Phosphothreonine. A phosphoserine mark is found at Ser-506, Ser-515, Ser-532, and Ser-534. 2 disordered regions span residues 524 to 566 and 579 to 631; these read KTLE…IGCR and VVVL…SSNC. Thr-537 carries the post-translational modification Phosphothreonine. Residues 550-561 show a composition bias toward polar residues; the sequence is CTSSKVTFQPPS. Residues 590-631 are compositionally biased toward basic and acidic residues; it reads PQTKDQVAEKDPTQHKEDEGEIQPENKEDSIENVRETDSSNC.

Belongs to the shootin family. Interacts with L1CAM; this interaction occurs in axonal growth cones. Interacts with actin filament retrograde flow; this interaction is enhanced in a netrin-1- and PAK1-dependent manner and promotes F-actin-substrate coupling and concomitant formation of traction forces at axonal growth cones. Interacts with RUFY3. Interacts with PFN2. Interacts (via N-terminus) with KIF20B; this interaction is direct and promotes the association of SHTN1 to microtubules in primary neurons. Associates with microtubule. In terms of processing, phosphorylated on Ser-101 and Ser-249 by PAK1 through a CDC42- and RAC1-dependent signaling pathway, which enhances its association with F-actin retrograde flow in filopodia and lamellipodia of axonal growth cones. Phosphorylation on Ser-101 and Ser-249 is increased by netrin-1.

Its subcellular location is the perikaryon. It is found in the cell projection. The protein localises to the axon. The protein resides in the growth cone. It localises to the cytoplasm. Its subcellular location is the cytoskeleton. It is found in the filopodium. The protein localises to the lamellipodium. Involved in the generation of internal asymmetric signals required for neuronal polarization and neurite outgrowth. Mediates netrin-1-induced F-actin-substrate coupling or 'clutch engagement' within the axon growth cone through activation of CDC42, RAC1 and PAK1-dependent signaling pathway, thereby converting the F-actin retrograde flow into traction forces, concomitantly with filopodium extension and axon outgrowth. Plays a role in cytoskeletal organization by regulating the subcellular localization of phosphoinositide 3-kinase (PI3K) activity at the axonal growth cone. Also plays a role in regenerative neurite outgrowth. In the developing cortex, cooperates with KIF20B to promote both the transition from the multipolar to the bipolar stage and the radial migration of cortical neurons from the ventricular zone toward the superficial layer of the neocortex. Involved in the accumulation of phosphatidylinositol 3,4,5-trisphosphate (PIP3) in the growth cone of primary hippocampal neurons. This Homo sapiens (Human) protein is Shootin-1.